The sequence spans 402 residues: Phosphoglycerate kinase (402 aa).

Residues 24-26, R40, 63-66, R122, and R155 each bind substrate; these read DFN and HFGR. ATP-binding positions include K206, G297, E328, and 357–360; that span reads GGDS.

Belongs to the phosphoglycerate kinase family. In terms of assembly, monomer.

The protein localises to the cytoplasm. The catalysed reaction is (2R)-3-phosphoglycerate + ATP = (2R)-3-phospho-glyceroyl phosphate + ADP. Its pathway is carbohydrate degradation; glycolysis; pyruvate from D-glyceraldehyde 3-phosphate: step 2/5. This is Phosphoglycerate kinase from Prochlorococcus marinus (strain SARG / CCMP1375 / SS120).